The chain runs to 461 residues: MSTGKVVQIIGAVVDVEFPQDAVPQVYDALKITEGDLEGLVLEVQQQLGGGVVRTIAMGTSDGLRRGLNVVNTGQGIQVPVGVETLGRIMNVLGEPIDEAGPIGEKDRWSIHREAPAYAEQSMSNELLETGIKVIDLVCPFAKGGKVGLFGGAGVGKTVNMMELIRNIAIEHSGYSVFAGVGERTREGNDFYHEMNDSNVLDKVSLVYGQMNEPPGNRLRVAFTGLTMAEKFRDEGRDVLFFVDNIYRYTLAGTEVSALLGRMPSAVGYQPTLAEEMGVLQERITSTNKGSITSIQAVYVPADDLTDPSPATTFAHLDATVVLSRDIASQGIYPAIDPLDSSSRQLDPLVVGTEHYETARGVQTVLQRYKELKDIIAILGMDELSEEDKQTVSRARKIQRYLSQPFFVAEVFTGSPGKYVSLKDTIAGFKGILAGEYDDMPEQAFYMVGGIEEAIEKANKM.

151–158 (GGAGVGKT) is an ATP binding site.

Belongs to the ATPase alpha/beta chains family. In terms of assembly, F-type ATPases have 2 components, CF(1) - the catalytic core - and CF(0) - the membrane proton channel. CF(1) has five subunits: alpha(3), beta(3), gamma(1), delta(1), epsilon(1). CF(0) has three main subunits: a(1), b(2) and c(9-12). The alpha and beta chains form an alternating ring which encloses part of the gamma chain. CF(1) is attached to CF(0) by a central stalk formed by the gamma and epsilon chains, while a peripheral stalk is formed by the delta and b chains.

The protein resides in the cell inner membrane. The enzyme catalyses ATP + H2O + 4 H(+)(in) = ADP + phosphate + 5 H(+)(out). Produces ATP from ADP in the presence of a proton gradient across the membrane. The catalytic sites are hosted primarily by the beta subunits. The polypeptide is ATP synthase subunit beta (Colwellia psychrerythraea (strain 34H / ATCC BAA-681) (Vibrio psychroerythus)).